A 591-amino-acid chain; its full sequence is Aspartate--tRNA ligase (591 aa).

Glu175 is an L-aspartate binding site. Residues 199–202 (QLFK) are aspartate. Arg221 lines the L-aspartate pocket. ATP is bound by residues 221–223 (RDE) and Gln230. His449 contributes to the L-aspartate binding site. An ATP-binding site is contributed by Glu483. L-aspartate is bound at residue Arg490. ATP is bound at residue 535-538 (GLDR).

It belongs to the class-II aminoacyl-tRNA synthetase family. Type 1 subfamily. In terms of assembly, homodimer.

It is found in the cytoplasm. It catalyses the reaction tRNA(Asp) + L-aspartate + ATP = L-aspartyl-tRNA(Asp) + AMP + diphosphate. Catalyzes the attachment of L-aspartate to tRNA(Asp) in a two-step reaction: L-aspartate is first activated by ATP to form Asp-AMP and then transferred to the acceptor end of tRNA(Asp). In Oceanobacillus iheyensis (strain DSM 14371 / CIP 107618 / JCM 11309 / KCTC 3954 / HTE831), this protein is Aspartate--tRNA ligase.